We begin with the raw amino-acid sequence, 62 residues long: Toxin Tb2 (62 aa).

Residues 1 to 62 enclose the LCN-type CS-alpha/beta domain; that stretch reads KEGYAMDHEG…KVWDYATNKC (62 aa). 4 cysteine pairs are disulfide-bonded: C11–C62, C15–C38, C23–C43, and C27–C45. C62 is modified (cysteine amide).

This sequence belongs to the long (4 C-C) scorpion toxin superfamily. Sodium channel inhibitor family. Beta subfamily. As to expression, expressed by the venom gland.

Its subcellular location is the secreted. In terms of biological role, beta toxins bind voltage-independently at site-4 of sodium channels (Nav) and shift the voltage of activation toward more negative potentials thereby affecting sodium channel activation and promoting spontaneous and repetitive firing. This toxin is active on mammals. The chain is Toxin Tb2 from Tityus bahiensis (Brazilian scorpion).